The following is a 373-amino-acid chain: Chaperone protein DnaJ (373 aa).

The J domain occupies 5 to 70; the sequence is DYYEVLGLQK…EKKSNYDQFG (66 aa). The segment at 132–214 adopts a CR-type zinc-finger fold; the sequence is GVEKEITVNR…CRGNGNVRKT (83 aa). Zn(2+) contacts are provided by Cys145, Cys148, Cys162, Cys165, Cys188, Cys191, Cys202, and Cys205. CXXCXGXG motif repeat units lie at residues 145-152, 162-169, 188-195, and 202-209; these read CEHCNGSG, CPTCSGTG, CDRCSGTG, and CTHCRGNG.

It belongs to the DnaJ family. In terms of assembly, homodimer. The cofactor is Zn(2+).

It localises to the cytoplasm. Its function is as follows. Participates actively in the response to hyperosmotic and heat shock by preventing the aggregation of stress-denatured proteins and by disaggregating proteins, also in an autonomous, DnaK-independent fashion. Unfolded proteins bind initially to DnaJ; upon interaction with the DnaJ-bound protein, DnaK hydrolyzes its bound ATP, resulting in the formation of a stable complex. GrpE releases ADP from DnaK; ATP binding to DnaK triggers the release of the substrate protein, thus completing the reaction cycle. Several rounds of ATP-dependent interactions between DnaJ, DnaK and GrpE are required for fully efficient folding. Also involved, together with DnaK and GrpE, in the DNA replication of plasmids through activation of initiation proteins. The chain is Chaperone protein DnaJ from Clostridium botulinum (strain Eklund 17B / Type B).